The chain runs to 191 residues: Glutathione S-transferase Y-2 (191 aa).

The region spanning 2-80 (TFATVYIKPH…YIVAKGSKPE (79 aa)) is the GST N-terminal domain. The 107-residue stretch at 85 to 191 (TTEERATNTR…VSQHPIIKNM (107 aa)) folds into the GST C-terminal domain.

This sequence belongs to the GST superfamily.

The catalysed reaction is RX + glutathione = an S-substituted glutathione + a halide anion + H(+). Functionally, conjugation of reduced glutathione to a wide number of exogenous and endogenous hydrophobic electrophiles. The chain is Glutathione S-transferase Y-2 (GSTY2) from Pichia kudriavzevii (Yeast).